Consider the following 620-residue polypeptide: Chaperone protein DnaK (620 aa).

Phosphothreonine; by autocatalysis is present on Thr-197. Residues 591–620 (AQKLGEAMANKNNAEQPKKKDDDVIDAEVE) form a disordered region.

This sequence belongs to the heat shock protein 70 family.

Acts as a chaperone. This Helicobacter pylori (strain HPAG1) protein is Chaperone protein DnaK.